We begin with the raw amino-acid sequence, 274 residues long: Nitrogenase iron protein (274 aa).

8–15 (GKGGIGKS) is an ATP binding site. Cys94 contacts [4Fe-4S] cluster. An ADP-ribosylarginine; by dinitrogenase reductase ADP-ribosyltransferase modification is found at Arg97. A [4Fe-4S] cluster-binding site is contributed by Cys131.

It belongs to the NifH/BchL/ChlL family. As to quaternary structure, homodimer. Requires [4Fe-4S] cluster as cofactor. Post-translationally, the reversible ADP-ribosylation of Arg-97 inactivates the nitrogenase reductase and regulates nitrogenase activity.

It catalyses the reaction N2 + 8 reduced [2Fe-2S]-[ferredoxin] + 16 ATP + 16 H2O = H2 + 8 oxidized [2Fe-2S]-[ferredoxin] + 2 NH4(+) + 16 ADP + 16 phosphate + 6 H(+). Its function is as follows. The key enzymatic reactions in nitrogen fixation are catalyzed by the nitrogenase complex, which has 2 components: the iron protein and the molybdenum-iron protein. The protein is Nitrogenase iron protein of Chlorobaculum parvum (strain DSM 263 / NCIMB 8327) (Chlorobium vibrioforme subsp. thiosulfatophilum).